Consider the following 262-residue polypeptide: Hemin import ATP-binding protein HmuV (262 aa).

An ABC transporter domain is found at M1–D247. G31 to S38 serves as a coordination point for ATP.

It belongs to the ABC transporter superfamily. Heme (hemin) importer (TC 3.A.1.14.5) family. In terms of assembly, the complex is composed of two ATP-binding proteins (HmuV), two transmembrane proteins (HmuU) and a solute-binding protein (HmuT).

It localises to the cell inner membrane. Functionally, part of the ABC transporter complex HmuTUV involved in hemin import. Responsible for energy coupling to the transport system. This chain is Hemin import ATP-binding protein HmuV, found in Plesiomonas shigelloides (Aeromonas shigelloides).